The sequence spans 165 residues: Anaphase-promoting complex subunit 11 (165 aa).

An RING-type; atypical zinc finger spans residues 52 to 95 (CPSCKFPGDQCPLVIGLCHHNFHDHCIYRWLDTPTSKGLCPMCR).

As to quaternary structure, the APC/C is composed of at least 13 subunits that stay tightly associated throughout the cell cycle: APC1, APC2, APC4, APC5, APC9, APC11, CDC16, CDC23, CDC26, CDC27, DOC1, MND2 and SWM1.

It participates in protein modification; protein ubiquitination. Functionally, probably catalytic subunit of the anaphase promoting complex/cyclosome (APC/C), a cell cycle-regulated E3 ubiquitin-protein ligase complex that controls progression through mitosis and the G1 phase of the cell cycle. The APC/C is thought to confer substrate specificity and, in the presence of ubiquitin-conjugating E2 enzymes, it catalyzes the formation of protein-ubiquitin conjugates that are subsequently degraded by the 26S proteasome. In early mitosis, the APC/C is activated by CDC20 and targets securin PDS1, the B-type cyclin CLB5, and other anaphase inhibitory proteins for proteolysis, thereby triggering the separation of sister chromatids at the metaphase-to-anaphase transition. In late mitosis and in G1, degradation of CLB5 allows activation of the APC/C by CDH1, which is needed to destroy CDC20 and the B-type cyclin CLB2 to allow exit from mitosis and creating the low CDK state necessary for cytokinesis and for reforming prereplicative complexes in G1 prior to another round of replication. APC11 is required to recruit the ubiquitin-conjugating enzyme E2 to the APC/C. This is Anaphase-promoting complex subunit 11 (APC11) from Saccharomyces cerevisiae (strain ATCC 204508 / S288c) (Baker's yeast).